The sequence spans 89 residues: Large ribosomal subunit protein bL27 (89 aa).

The tract at residues 1 to 24 (MAHKKAGGSSRNGRDSAGRRLGVK) is disordered.

This sequence belongs to the bacterial ribosomal protein bL27 family.

In Maricaulis maris (strain MCS10) (Caulobacter maris), this protein is Large ribosomal subunit protein bL27.